The sequence spans 375 residues: Actin (375 aa).

Belongs to the actin family.

The protein resides in the cytoplasm. It localises to the cytoskeleton. The catalysed reaction is ATP + H2O = ADP + phosphate + H(+). Functionally, actins are highly conserved proteins that are involved in various types of cell motility and are ubiquitously expressed in all eukaryotic cells. This is Actin from Giardia intestinalis (Giardia lamblia).